We begin with the raw amino-acid sequence, 414 residues long: Light-independent protochlorophyllide reductase subunit N (414 aa).

[4Fe-4S] cluster is bound by residues cysteine 16, cysteine 41, and cysteine 98.

The protein belongs to the BchN/ChlN family. In terms of assembly, protochlorophyllide reductase is composed of three subunits; BchL, BchN and BchB. Forms a heterotetramer of two BchB and two BchN subunits. [4Fe-4S] cluster is required as a cofactor.

It catalyses the reaction chlorophyllide a + oxidized 2[4Fe-4S]-[ferredoxin] + 2 ADP + 2 phosphate = protochlorophyllide a + reduced 2[4Fe-4S]-[ferredoxin] + 2 ATP + 2 H2O. The protein operates within porphyrin-containing compound metabolism; bacteriochlorophyll biosynthesis (light-independent). Its function is as follows. Component of the dark-operative protochlorophyllide reductase (DPOR) that uses Mg-ATP and reduced ferredoxin to reduce ring D of protochlorophyllide (Pchlide) to form chlorophyllide a (Chlide). This reaction is light-independent. The NB-protein (BchN-BchB) is the catalytic component of the complex. The protein is Light-independent protochlorophyllide reductase subunit N of Roseiflexus castenholzii (strain DSM 13941 / HLO8).